A 370-amino-acid polypeptide reads, in one-letter code: N-acetyltaurine hydrolase (370 aa).

His-26, His-28, Glu-189, His-221, His-250, and Asp-318 together coordinate a divalent metal cation.

This sequence belongs to the metallo-dependent hydrolases superfamily. Phosphotriesterase family. The cofactor is a divalent metal cation.

The protein resides in the cytoplasm. Its subcellular location is the cytosol. The enzyme catalyses N-acetyltaurine + H2O = taurine + acetate. Functionally, N-acetyltaurine hydrolase catalyzes the hydrolysis of N-acetyltaurine into taurine and acetate. The chain is N-acetyltaurine hydrolase (pter) from Dictyostelium discoideum (Social amoeba).